The chain runs to 65 residues: MAMKIDPELCTSCGDCEPVCPTNAIAPKKGVYVINADTCTECEGEHDLPQCVNACMTDNCINPAA.

The 29-residue stretch at 2 to 30 (AMKIDPELCTSCGDCEPVCPTNAIAPKKG) folds into the 4Fe-4S ferredoxin-type domain. The [4Fe-4S] cluster site is built by Cys10, Cys13, Cys16, Cys20, Cys39, Cys42, Cys51, and Cys55.

[4Fe-4S] cluster is required as a cofactor.

Ferredoxins are iron-sulfur proteins that transfer electrons in a wide variety of metabolic reactions. This ferredoxin probably participates in nitrogen fixation. This Rhodobacter capsulatus (Rhodopseudomonas capsulata) protein is Ferredoxin-1 (fdxN).